A 271-amino-acid chain; its full sequence is DNA-binding protein HEXBP (271 aa).

Basic and acidic residues-rich tracts occupy residues 1–12 (MSETEDVKRPRT) and 21–42 (CGKEGHYARECPEADSKGDERS). Residues 1–42 (MSETEDVKRPRTESSTSCRNCGKEGHYARECPEADSKGDERS) are disordered. 4 CCHC-type zinc fingers span residues 16-33 (TSCRNCGKEGHYARECPE), 43-60 (TTCFRCGEEGHMSRECPN), 70-87 (MTCFRCGEAGHMSRDCPN), and 97-114 (FECYKCGQEGHLSRDCPS). Positions 107-136 (HLSRDCPSSQGGSRGGYGQKRGRSGAQGGY) are disordered. Over residues 118 to 136 (GSRGGYGQKRGRSGAQGGY) the composition is skewed to gly residues. CCHC-type zinc fingers lie at residues 140–157 (RTCYKCGDAGHISRDCPN), 168–185 (RTCYKCGDAGHISRDCPN), 196–213 (RKCYKCGESGHMSRECPS), 222–239 (RACYKCGKPGHISRECPE), and 253–270 (RTCYKCGEAGHISRDCPS).

It localises to the nucleus. In terms of biological role, binds to single-stranded DNA located in the 5' hexanucleotide repeat region of the L.major leishmanolysin (GP63) gene. This Leishmania major protein is DNA-binding protein HEXBP (HEXBP).